Consider the following 259-residue polypeptide: UPF0246 protein PSHAa2558 (259 aa).

It belongs to the UPF0246 family.

This Pseudoalteromonas translucida (strain TAC 125) protein is UPF0246 protein PSHAa2558.